Consider the following 56-residue polypeptide: Sec-independent protein translocase protein TatA (56 aa).

A helical membrane pass occupies residues 1–21 (MALGPWQIFLILVIILVLFGA).

The protein belongs to the TatA/E family. In terms of assembly, the Tat system comprises two distinct complexes: a TatABC complex, containing multiple copies of TatA, TatB and TatC subunits, and a separate TatA complex, containing only TatA subunits. Substrates initially bind to the TatABC complex, which probably triggers association of the separate TatA complex to form the active translocon.

The protein localises to the cell inner membrane. Part of the twin-arginine translocation (Tat) system that transports large folded proteins containing a characteristic twin-arginine motif in their signal peptide across membranes. TatA could form the protein-conducting channel of the Tat system. This is Sec-independent protein translocase protein TatA from Ehrlichia ruminantium (strain Welgevonden).